The sequence spans 259 residues: Tryptophan synthase alpha chain (259 aa).

Active-site proton acceptor residues include glutamate 48 and aspartate 59.

This sequence belongs to the TrpA family. As to quaternary structure, tetramer of two alpha and two beta chains.

The catalysed reaction is (1S,2R)-1-C-(indol-3-yl)glycerol 3-phosphate + L-serine = D-glyceraldehyde 3-phosphate + L-tryptophan + H2O. Its pathway is amino-acid biosynthesis; L-tryptophan biosynthesis; L-tryptophan from chorismate: step 5/5. The alpha subunit is responsible for the aldol cleavage of indoleglycerol phosphate to indole and glyceraldehyde 3-phosphate. In Syntrophomonas wolfei subsp. wolfei (strain DSM 2245B / Goettingen), this protein is Tryptophan synthase alpha chain.